We begin with the raw amino-acid sequence, 143 residues long: Nucleoside diphosphate kinase (143 aa).

Positions 11, 59, 87, 93, 104, and 114 each coordinate ATP. Catalysis depends on H117, which acts as the Pros-phosphohistidine intermediate.

It belongs to the NDK family. Homotetramer. Requires Mg(2+) as cofactor.

Its subcellular location is the cytoplasm. The catalysed reaction is a 2'-deoxyribonucleoside 5'-diphosphate + ATP = a 2'-deoxyribonucleoside 5'-triphosphate + ADP. It carries out the reaction a ribonucleoside 5'-diphosphate + ATP = a ribonucleoside 5'-triphosphate + ADP. In terms of biological role, major role in the synthesis of nucleoside triphosphates other than ATP. The ATP gamma phosphate is transferred to the NDP beta phosphate via a ping-pong mechanism, using a phosphorylated active-site intermediate. The sequence is that of Nucleoside diphosphate kinase from Shewanella loihica (strain ATCC BAA-1088 / PV-4).